Here is a 244-residue protein sequence, read N- to C-terminus: Ferredoxin--NADP reductase B (244 aa).

Residues 4–106 (AEPFEARLVA…VGPHGLFTRD (103 aa)) form the FAD-binding FR-type domain. FAD contacts are provided by residues 55 to 58 (RAYS) and threonine 120.

This sequence belongs to the ferredoxin--NADP reductase type 1 family. FAD serves as cofactor.

The enzyme catalyses 2 reduced [4Fe-4S]-[ferredoxin] + NADP(+) + H(+) = 2 oxidized [4Fe-4S]-[ferredoxin] + NADPH. Functionally, transports electrons between NADPH and ferredoxin. Can transfer electrons to ferredoxins Fdx2 and Fdx8. Prefers NADPH to NADH. The chain is Ferredoxin--NADP reductase B from Sorangium cellulosum (strain So ce56) (Polyangium cellulosum (strain So ce56)).